Consider the following 434-residue polypeptide: Histidinol dehydrogenase (434 aa).

Residues Y130, Q188, and N211 each contribute to the NAD(+) site. 3 residues coordinate substrate: S237, Q259, and H262. The Zn(2+) site is built by Q259 and H262. Active-site proton acceptor residues include E326 and H327. Positions 327, 360, 414, and 419 each coordinate substrate. Zn(2+) is bound at residue D360. H419 is a binding site for Zn(2+).

This sequence belongs to the histidinol dehydrogenase family. In terms of assembly, homodimer. It depends on Zn(2+) as a cofactor.

The catalysed reaction is L-histidinol + 2 NAD(+) + H2O = L-histidine + 2 NADH + 3 H(+). It participates in amino-acid biosynthesis; L-histidine biosynthesis; L-histidine from 5-phospho-alpha-D-ribose 1-diphosphate: step 9/9. In terms of biological role, catalyzes the sequential NAD-dependent oxidations of L-histidinol to L-histidinaldehyde and then to L-histidine. This is Histidinol dehydrogenase from Escherichia coli O157:H7.